Here is a 676-residue protein sequence, read N- to C-terminus: F420-dependent formate dehydrogenase 2 subunit alpha (676 aa).

The 4Fe-4S Mo/W bis-MGD-type domain maps to Phe-4–Asp-60. Cys-11, Cys-14, Cys-18, and Cys-46 together coordinate [4Fe-4S] cluster. Sec-133 is a non-standard amino acid (selenocysteine).

It belongs to the prokaryotic molybdopterin-containing oxidoreductase family. As to quaternary structure, dimer of an alpha (FdhA2) and a beta (FdhB2) subunit. It depends on [4Fe-4S] cluster as a cofactor. The cofactor is Mo-bis(molybdopterin guanine dinucleotide). Requires Zn(2+) as cofactor.

It catalyses the reaction oxidized coenzyme F420-(gamma-L-Glu)(n) + formate + 2 H(+) = reduced coenzyme F420-(gamma-L-Glu)(n) + CO2. Catalyzes the oxidation of formate to carbon dioxide, with coenzyme F420 as the electron acceptor. In vitro can also use methyl viologen as electron acceptor. The chain is F420-dependent formate dehydrogenase 2 subunit alpha from Methanococcus maripaludis (strain DSM 14266 / JCM 13030 / NBRC 101832 / S2 / LL).